A 134-amino-acid polypeptide reads, in one-letter code: Fluoride-specific ion channel FluC 3 (134 aa).

Helical transmembrane passes span 4–24 (LIILVFVGGAFGAMCREFIML), 35–55 (MDIFVANIIAAFLLGLTTSFF), 67–87 (MVGTGIMGGLSTFSSFVFGAV), and 100–120 (ICYLVASLIVGFIAVELGLMI). Glycine 74 and serine 77 together coordinate Na(+).

Belongs to the fluoride channel Fluc/FEX (TC 1.A.43) family.

It localises to the cell inner membrane. The catalysed reaction is fluoride(in) = fluoride(out). Its activity is regulated as follows. Na(+) is not transported, but it plays an essential structural role and its presence is essential for fluoride channel function. Functionally, fluoride-specific ion channel. Important for reducing fluoride concentration in the cell, thus reducing its toxicity. This chain is Fluoride-specific ion channel FluC 3, found in Yersinia pseudotuberculosis serotype I (strain IP32953).